Reading from the N-terminus, the 380-residue chain is O-phospho-L-seryl-tRNA:Cys-tRNA synthase (380 aa).

Pyridoxal 5'-phosphate contacts are provided by residues 86–87 (AR), Asn192, and 215–217 (SGH). At Lys218 the chain carries N6-(pyridoxal phosphate)lysine.

It belongs to the SepCysS family. In terms of assembly, homodimer. Interacts with SepRS. Pyridoxal 5'-phosphate serves as cofactor.

It catalyses the reaction O-phospho-L-seryl-tRNA(Cys) + hydrogen sulfide + H(+) = L-cysteinyl-tRNA(Cys) + phosphate. Converts O-phospho-L-seryl-tRNA(Cys) (Sep-tRNA(Cys)) to L-cysteinyl-tRNA(Cys) (Cys-tRNA(Cys)). This is O-phospho-L-seryl-tRNA:Cys-tRNA synthase from Methanococcus maripaludis (strain C6 / ATCC BAA-1332).